A 381-amino-acid polypeptide reads, in one-letter code: GDP-mannose transporter (381 aa).

Topologically, residues 1–44 (MAEGKKTDDYTIQMDSIDQGNKSFEAPPPPQPRSPPSGSLSNNP) are cytoplasmic. Residues 19–41 (QGNKSFEAPPPPQPRSPPSGSLS) form a disordered region. The segment covering 26–35 (APPPPQPRSP) has biased composition (pro residues). The helical transmembrane segment at 45–65 (ILPVLAYCGSSILMTVMNKYV) threads the bilayer. The Lumenal segment spans residues 66–70 (LSGTD). A helical transmembrane segment spans residues 71–91 (FNLNFFLLCIQSLVCIIAIQT). At 92 to 109 (CKSCGLITYRDFSADEAR) the chain is on the cytoplasmic side. The chain crosses the membrane as a helical span at residues 110-126 (KWFPITLLLIGMIYTGS). Residues 127–133 (KALQFLS) lie on the Lumenal side of the membrane. A helical membrane pass occupies residues 134–150 (IPVYTIFKNLTIILIAY). Residues 151–159 (GEVLWFGGS) lie on the Cytoplasmic side of the membrane. Residues 160 to 181 (VTGLTLFSFGLMVLSSIIAAWA) form a helical membrane-spanning segment. At 182 to 199 (DIKHAVESNGDATAKVST) the chain is on the lumenal side. Residues 200–220 (LNAGYIWMLVNCLCTSSYVLG) traverse the membrane as a helical segment. At 221 to 234 (MRKRIKLTNFKDFD) the chain is on the cytoplasmic side. Residues 235 to 255 (TMFYNNLLSIPVLIVLSAFLE) traverse the membrane as a helical segment. At 256 to 273 (DWSSTNVNRNFPPMDRNS) the chain is on the lumenal side. The chain crosses the membrane as a helical span at residues 274-294 (IVFAMILSGLSSVFISYTSAW). At 295–302 (CVRVTSST) the chain is on the cytoplasmic side. The helical transmembrane segment at 303–323 (TYSMVGALNKLPIAISGLIFF) threads the bilayer. At 324 to 326 (DAP) the chain is on the lumenal side. The helical transmembrane segment at 327-347 (VTFPSVSAIVVGFVSGIVYAV) threads the bilayer. The Cytoplasmic portion of the chain corresponds to 348 to 381 (AKIKQNAKPRTGVLPTANPPVSASSQSMRDSLRS). Residues 358–381 (TGVLPTANPPVSASSQSMRDSLRS) are disordered. Over residues 366 to 381 (PPVSASSQSMRDSLRS) the composition is skewed to polar residues.

The protein belongs to the TPT transporter family. SLC35D subfamily. Homooligomer.

It is found in the golgi apparatus membrane. Its subcellular location is the cytoplasmic vesicle membrane. It localises to the endoplasmic reticulum membrane. In terms of biological role, involved in the import of GDP-mannose from the cytoplasm into the Golgi lumen. The sequence is that of GDP-mannose transporter (gmt1) from Aspergillus niger (strain ATCC MYA-4892 / CBS 513.88 / FGSC A1513).